A 362-amino-acid chain; its full sequence is Sphingolipid delta(4)-desaturase (362 aa).

Over residues 1–10 the composition is skewed to low complexity; the sequence is MAESTATTTA. The disordered stretch occupies residues 1–20; that stretch reads MAESTATTTAVPPPAEESWN. A run of 3 helical transmembrane segments spans residues 60–80, 90–110, and 121–143; these read PLTK…AYLL, FFLT…LAIH, and TLYN…AASF. The short motif at 110-114 is the Histidine box-1 element; that stretch reads HELSH. Residues 147–151 carry the Histidine box-2 motif; the sequence is HMEHH. 3 consecutive transmembrane segments (helical) span residues 169–189, 200–220, and 228–248; these read LILF…LLFY, PFTL…YLVV, and LAYF…AGHF. Positions 290-294 match the Histidine box-3 motif; the sequence is HIEHH.

Belongs to the fatty acid desaturase type 1 family. DEGS subfamily.

It localises to the membrane. It carries out the reaction an N-acylsphinganine + 2 Fe(II)-[cytochrome b5] + O2 + 2 H(+) = an N-acylsphing-4-enine + 2 Fe(III)-[cytochrome b5] + 2 H2O. It functions in the pathway lipid metabolism; sphingolipid metabolism. Its function is as follows. Delta(4)-fatty-acid desaturase which introduces a double bond at the 4-position in the long-chain base (LCB) of ceramides. Required for sphingosine biosynthesis. The chain is Sphingolipid delta(4)-desaturase (dsd1) from Schizosaccharomyces pombe (strain 972 / ATCC 24843) (Fission yeast).